The chain runs to 349 residues: Hydroxymethylglutaryl-CoA synthase (349 aa).

Residues Asp30 and Ala31 each contribute to the (3S)-3-hydroxy-3-methylglutaryl-CoA site. Catalysis depends on Glu82, which acts as the Proton donor/acceptor. (3S)-3-hydroxy-3-methylglutaryl-CoA-binding residues include Cys114 and Thr155. The Acyl-thioester intermediate role is filled by Cys114. Position 203 (Arg203) interacts with CoA. Residues Thr205 and His238 each contribute to the (3S)-3-hydroxy-3-methylglutaryl-CoA site. His238 acts as the Proton donor/acceptor in catalysis. Lys243 is a CoA binding site. (3S)-3-hydroxy-3-methylglutaryl-CoA-binding residues include Asn270 and Ser300.

This sequence belongs to the thiolase-like superfamily. Archaeal HMG-CoA synthase family. Interacts with acetoacetyl-CoA thiolase that catalyzes the precedent step in the pathway and with a DUF35 protein. The acetoacetyl-CoA thiolase/HMG-CoA synthase complex channels the intermediate via a fused CoA-binding site, which allows for efficient coupling of the endergonic thiolase reaction with the exergonic HMGCS reaction.

It catalyses the reaction acetoacetyl-CoA + acetyl-CoA + H2O = (3S)-3-hydroxy-3-methylglutaryl-CoA + CoA + H(+). It participates in metabolic intermediate biosynthesis; (R)-mevalonate biosynthesis; (R)-mevalonate from acetyl-CoA: step 2/3. Its function is as follows. Catalyzes the condensation of acetyl-CoA with acetoacetyl-CoA to form 3-hydroxy-3-methylglutaryl-CoA (HMG-CoA). Functions in the mevalonate (MVA) pathway leading to isopentenyl diphosphate (IPP), a key precursor for the biosynthesis of isoprenoid compounds that are building blocks of archaeal membrane lipids. The chain is Hydroxymethylglutaryl-CoA synthase from Methanococcus maripaludis (strain C7 / ATCC BAA-1331).